We begin with the raw amino-acid sequence, 427 residues long: NAD kinase 2, mitochondrial (427 aa).

A mitochondrion-targeting transit peptide spans Met1–Ala33.

Belongs to the NAD kinase family. Homodimer.

The protein resides in the mitochondrion. It carries out the reaction NAD(+) + ATP = ADP + NADP(+) + H(+). Its function is as follows. Mitochondrial NAD(+) kinase that phosphorylates NAD(+) to yield NADP(+). Can use both ATP or inorganic polyphosphate as the phosphoryl donor. The polypeptide is NAD kinase 2, mitochondrial (nadk2) (Xenopus tropicalis (Western clawed frog)).